The following is a 493-amino-acid chain: Reticulophagy regulator 1 (493 aa).

The segment at 1-52 (MASPAPPEPAEQGSPALAAAPQAPPPPTRAPPEEPEGAAPPEEGAAAGAGRQ) is disordered. At 1–55 (MASPAPPEPAEQGSPALAAAPQAPPPPTRAPPEEPEGAAPPEEGAAAGAGRQVEE) the chain is on the cytoplasmic side. Residues 37-52 (GAAPPEEGAAAGAGRQ) show a composition bias toward low complexity. Residues 56–76 (AAGGVAAVVTWLLGEPALWLG) traverse the membrane as a helical segment. The Lumenal segment spans residues 77–87 (GRADELLSWKR). The segment at 80–229 (DELLSWKRPL…LLCAFLCPLF (150 aa)) is reticulon homology domain. The chain crosses the membrane as a helical span at residues 88–108 (PLHSLLAFVGANLVFWFLALT). Residues 109 to 114 (PWRVYH) lie on the Cytoplasmic side of the membrane. A helical transmembrane segment spans residues 115-135 (LISVMILTRVIMQIIKDMILS). Residues 136-204 (RTRGAQLWRS…LVCSVCTFFT (69 aa)) lie on the Lumenal side of the membrane. Ser145 is subject to Phosphoserine. A Phosphoserine; by CAMK2B modification is found at Ser147. Ser149 bears the Phosphoserine mark. A helical transmembrane segment spans residues 205-225 (ILGSYIPGVILSYLLLLCAFL). Residues 226–493 (CPLFKCNDIG…GFLSNLLGGH (268 aa)) are Cytoplasmic-facing. Residues 315-326 (FNLSEGYTPQTD) show a composition bias toward polar residues. Disordered regions lie at residues 315–394 (FNLS…GLSL) and 435–493 (AAPS…LGGH). A compositionally biased stretch (basic and acidic residues) spans 330–344 (DLDRPSEEVFSRDLS). Thr353 carries the post-translational modification Phosphothreonine. The segment covering 368-388 (ELKRKKEQLDGGPRRSTEKKS) has biased composition (basic and acidic residues). The span at 441-463 (EDTDTEEGDDFELLDQSELDQIE) shows a compositional bias: acidic residues. Positions 449–454 (DDFELL) match the LIR motif motif. Polar residues predominate over residues 467-486 (GLSQDQEAEAQQNKKSSGFL).

This sequence belongs to the RETREG family. In terms of assembly, homooligomer; oligomerization is enhanced following endoplasmic reticulum stress and is mediated by the reticulon homology domain. Interacts with ATG8 family modifier proteins MAP1LC3A, MAP1LC3B, GABARAP, GABARAPL1 and GABARAPL2. Post-translationally, phosphorylation at Ser-147 by CAMK2B enhances oligomerization and membrane scission and reticulophagy activity.

The protein resides in the golgi apparatus. Its subcellular location is the cis-Golgi network membrane. It is found in the endoplasmic reticulum membrane. Its function is as follows. Endoplasmic reticulum (ER)-anchored autophagy regulator which mediates ER delivery into lysosomes through sequestration into autophagosomes. Promotes membrane remodeling and ER scission via its membrane bending capacity and targets the fragments into autophagosomes via interaction with ATG8 family proteins. Active under basal conditions. Required for collagen quality control in a LIR motif-dependent manner. Required for long-term survival of nociceptive and autonomic ganglion neurons. The polypeptide is Reticulophagy regulator 1 (RETREG1) (Bos taurus (Bovine)).